Here is a 375-residue protein sequence, read N- to C-terminus: MENFPTEYFLNTSVRLLEYIRYRDSNYTREERIENLHYAYNKAAHHFAQPRQQKMLKVDPKRLQASLQTIVGMVVYSWAKVSKECMADLSIHYTYTLVLDDSSDDPHPAMLNYFDDLQAGREQAHPWWALVNEHFPNVLRHFGPFCSLNLIRSTMDFFEGCWIEQYNFGGFPGSDDYPQFLRRMNGLGHCVGASLWPKDLFDERKHFLEITSAVAQMENWMVWVNDLMSFYKEFDDERDQISLVKNFVTCHEITLDEALEKLTQETLHSSKQMVAVFSDKDPQVMDTIECFMHGYVTWHLCDARYRLHEIYEKVKDQDTEDAKKFCKFFEQAANVGAVAPSEWAYPQVAQLANVRAKDDVKEAHKPILSSIELVE.

Belongs to the trichodiene synthase family.

The enzyme catalyses (2E,6E)-farnesyl diphosphate = trichodiene + diphosphate. It functions in the pathway sesquiterpene biosynthesis; trichothecene biosynthesis. Its function is as follows. TS is a member of the terpene cyclase group of enzymes. It catalyzes the isomerization and cyclization of farnesyl pyro-phosphate to form trichodiene, the first cyclic intermediate in the biosynthetic pathway for trichothecenes. It serves to branch trichothecene biosynthesis from the isoprenoid pathway. In Fusarium acaciae-mearnsii, this protein is Trichodiene synthase (TRI5).